The following is a 257-amino-acid chain: Putative cysteine-rich repeat secretory protein 28 (257 aa).

Residues 1 to 26 (MFSTFGSVPILTVVAIQLFLIRNVLS) form the signal peptide. Gnk2-homologous domains are found at residues 32–136 (AYLH…TVDS) and 142–254 (YEND…LYPF).

The protein belongs to the cysteine-rich repeat secretory protein family.

The protein localises to the secreted. This Arabidopsis thaliana (Mouse-ear cress) protein is Putative cysteine-rich repeat secretory protein 28 (CRRSP28).